We begin with the raw amino-acid sequence, 382 residues long: MIOREX complex component 5 (382 aa).

A mitochondrion-targeting transit peptide spans 1–12 (MRRTFSQLATRL).

As to quaternary structure, associates with the mitochondrial ribosome.

Its subcellular location is the mitochondrion. Component of MIOREX complexes, large expressome-like assemblies of ribosomes with factors involved in all the steps of post-transcriptional gene expression. The polypeptide is MIOREX complex component 5 (Saccharomyces cerevisiae (strain ATCC 204508 / S288c) (Baker's yeast)).